Consider the following 77-residue polypeptide: U8-lycotoxin-Ls1o (77 aa).

The signal sequence occupies residues 1–20 (MKLMIFTGLVLFAIVSLIEA). The propeptide occupies 21-26 (QAENGK).

The protein belongs to the neurotoxin 19 (CSTX) family. 08 (U8-Lctx) subfamily. Contains 4 disulfide bonds. As to expression, expressed by the venom gland.

It localises to the secreted. In Lycosa singoriensis (Wolf spider), this protein is U8-lycotoxin-Ls1o.